A 240-amino-acid chain; its full sequence is Arylmalonate decarboxylase (240 aa).

The catalysed reaction is 2-aryl-2-methylmalonate + H(+) = 2-arylpropionate + CO2. This Bordetella bronchiseptica (Alcaligenes bronchisepticus) protein is Arylmalonate decarboxylase.